We begin with the raw amino-acid sequence, 1284 residues long: ABC multidrug transporter atrC (1284 aa).

Residues 1–11 (MKSTAESKETP) show a composition bias toward basic and acidic residues. The interval 1–24 (MKSTAESKETPSQDESTTSVPCTE) is disordered. 6 consecutive transmembrane segments (helical) span residues 55–75 (AVAILAACASGAGIALQNLIF), 99–119 (AAELALYFVYLGIARLVLSYT), 178–198 (IGLLFQGLAAFVTLSLSRLWC), 203–223 (TLICICIPVATIGTTGVVAAV), 282–302 (LLGLLFSAEYTIIYLGYGLAF), and 320–340 (IFTVLLSVVIASINLTLLAPY). Positions 55-346 (AVAILAACAS…LAPYSIEFSR (292 aa)) constitute an ABC transmembrane type-1 1 domain. Positions 381–626 (VELENVTFSY…DGVYAGLVKI (246 aa)) constitute an ABC transporter 1 domain. Residues Asn385 and Asn401 are each glycosylated (N-linked (GlcNAc...) asparagine). 416 to 423 (GQSGSGKS) lines the ATP pocket. 2 N-linked (GlcNAc...) asparagine glycosylation sites follow: Asn488 and Asn632. 2 helical membrane passes run 705 to 725 (LVVLLGCLGGCAMYPGQAILM) and 745 to 765 (FYASMLIVLAAGCLICYLAVG). The ABC transmembrane type-1 2 domain maps to 705–992 (LVVLLGCLGG…LFQWSTSITK (288 aa)). A glycan (N-linked (GlcNAc...) asparagine) is linked at Asn800. The next 4 helical transmembrane spans lie at 824 to 844 (IALVVIAVLQVVTCGILAIAF), 846 to 866 (WKLGLVVVFGGIPPLVGAGMV), 931 to 951 (MICFGLTQCIEYWFQALGFWY), and 955 to 975 (LVSLGETSMYSFFVAFLSVFF). A glycan (N-linked (GlcNAc...) asparagine) is linked at Asn995. The region spanning 1027 to 1280 (IAMDNVRFSY…GGLYRRMCEA (254 aa)) is the ABC transporter 2 domain. 1062-1069 (GSSGCGKS) lines the ATP pocket. An N-linked (GlcNAc...) asparagine glycan is attached at Asn1122.

The protein belongs to the ABC transporter superfamily. ABCB family. Multidrug resistance exporter (TC 3.A.1.201) subfamily.

The protein resides in the cell membrane. Its function is as follows. Pleiotropic ABC efflux transporter involved in the protection of the cells against a wide range of toxic compounds. This is ABC multidrug transporter atrC from Emericella nidulans (Aspergillus nidulans).